A 502-amino-acid polypeptide reads, in one-letter code: Probable zinc metalloprotease MGG_02107 (502 aa).

Positions 1-21 are cleaved as a signal peptide; that stretch reads MRSPPGAVAALASVAAQLATA. Zn(2+) contacts are provided by H182, D202, and E235. N-linked (GlcNAc...) asparagine glycosylation is present at N250. Position 262 (D262) interacts with Zn(2+). The disordered stretch occupies residues 284-307; the sequence is QGGSPAGESKERAETRASIGGEND. Residues N375, N417, and N427 are each glycosylated (N-linked (GlcNAc...) asparagine). In terms of domain architecture, Fibronectin type-III spans 414–502; that stretch reads QVRNVTVDTS…KSPATMPFPG (89 aa).

This sequence belongs to the peptidase M28 family. M28B subfamily. Requires Zn(2+) as cofactor.

Its subcellular location is the secreted. This chain is Probable zinc metalloprotease MGG_02107, found in Pyricularia oryzae (strain 70-15 / ATCC MYA-4617 / FGSC 8958) (Rice blast fungus).